The following is a 411-amino-acid chain: Argininosuccinate synthase (411 aa).

ATP-binding positions include 15 to 23 (AYSGGLDTS) and Ala-42. L-citrulline-binding residues include Tyr-93 and Ser-98. Gly-123 contributes to the ATP binding site. L-aspartate is bound by residues Thr-125, Asn-129, and Asp-130. Position 129 (Asn-129) interacts with L-citrulline. L-citrulline-binding residues include Arg-133, Ser-185, Ser-194, Glu-270, and Tyr-282.

It belongs to the argininosuccinate synthase family. Type 1 subfamily. As to quaternary structure, homotetramer.

It is found in the cytoplasm. The enzyme catalyses L-citrulline + L-aspartate + ATP = 2-(N(omega)-L-arginino)succinate + AMP + diphosphate + H(+). It participates in amino-acid biosynthesis; L-arginine biosynthesis; L-arginine from L-ornithine and carbamoyl phosphate: step 2/3. The sequence is that of Argininosuccinate synthase from Psychrobacter sp. (strain PRwf-1).